A 347-amino-acid chain; its full sequence is Bifunctional methylenetetrahydrofolate dehydrogenase/cyclohydrolase 2, mitochondrial (347 aa).

Residues 98–102 (YVRNK) and 145–147 (VQL) contribute to the substrate site. Residues 214 to 216 (GRS) and Arg-247 each bind NAD(+). 323–327 (PGGVG) serves as a coordination point for substrate.

Belongs to the tetrahydrofolate dehydrogenase/cyclohydrolase family. The cofactor is Mg(2+).

Its subcellular location is the mitochondrion inner membrane. The catalysed reaction is (6R)-5,10-methylene-5,6,7,8-tetrahydrofolate + NAD(+) = (6R)-5,10-methenyltetrahydrofolate + NADH. The enzyme catalyses (6R)-5,10-methenyltetrahydrofolate + H2O = (6R)-10-formyltetrahydrofolate + H(+). It carries out the reaction (6R)-5,10-methylene-5,6,7,8-tetrahydrofolate + NADP(+) = (6R)-5,10-methenyltetrahydrofolate + NADPH. Its pathway is one-carbon metabolism; tetrahydrofolate interconversion. Its function is as follows. Bifunctional mitochondrial folate-interconverting enzyme that has both NAD/NADP-dependent methylenetetrahydrofolate dehydrogenase and methenyltetrahydrofolate cyclohydrolase activities. This chain is Bifunctional methylenetetrahydrofolate dehydrogenase/cyclohydrolase 2, mitochondrial, found in Callithrix jacchus (White-tufted-ear marmoset).